The primary structure comprises 714 residues: 2'-5'-oligoadenylate synthase 2 (714 aa).

A lipid anchor (N-myristoyl glycine) is attached at G2. OAS domain regions lie at residues 11–336 (KPSE…SWNV) and 344–683 (TPGH…WNVP). Residue S397 participates in ATP binding. D409 and D480 together coordinate Mg(2+). R544 and K547 together coordinate ATP.

Belongs to the 2-5A synthase family. As to quaternary structure, homodimer. The cofactor is Mg(2+). Myristoylation is not essential for its activity. Post-translationally, glycosylated. Glycosylation is essential for its activity.

It is found in the cytoplasm. It localises to the perinuclear region. The catalysed reaction is 3 ATP = 5'-triphosphoadenylyl-(2'-&gt;5')-adenylyl-(2'-&gt;5')-adenosine + 2 diphosphate. With respect to regulation, produced as a latent enzyme which is activated by double stranded RNA (dsRNA) generated during the course of viral infection. The dsRNA activator must be at least 15 nucleotides long, and no modification of the 2'-hydroxyl group is tolerated. ssRNA or dsDNA do not act as activators. Strongly inhibited by copper, iron and zinc ions. Partially inhibited by cobalt and nickel ions. Functionally, interferon-induced, dsRNA-activated antiviral enzyme which plays a critical role in cellular innate antiviral response. Activated by detection of double stranded RNA (dsRNA): polymerizes higher oligomers of 2'-5'-oligoadenylates (2-5A) from ATP which then bind to the inactive monomeric form of ribonuclease L (RNASEL) leading to its dimerization and subsequent activation. Activation of RNASEL leads to degradation of cellular as well as viral RNA, resulting in the inhibition of protein synthesis, thus terminating viral replication. Can mediate the antiviral effect via the classical RNASEL-dependent pathway or an alternative antiviral pathway independent of RNASEL. In addition, it may also play a role in other cellular processes such as apoptosis, cell growth, differentiation and gene regulation. May act as a negative regulator of lactation, stopping lactation in virally infected mammary gland lobules, thereby preventing transmission of viruses to neonates. Non-infected lobules would not be affected, allowing efficient pup feeding during infection. This Bos taurus (Bovine) protein is 2'-5'-oligoadenylate synthase 2 (OAS2).